The primary structure comprises 510 residues: ATP synthase subunit alpha, chloroplastic (510 aa).

ATP is bound at residue 170–177; the sequence is GDRQTGKT.

Belongs to the ATPase alpha/beta chains family. F-type ATPases have 2 components, CF(1) - the catalytic core - and CF(0) - the membrane proton channel. CF(1) has five subunits: alpha(3), beta(3), gamma(1), delta(1), epsilon(1). CF(0) has four main subunits: a, b, b' and c.

The protein localises to the plastid. The protein resides in the chloroplast thylakoid membrane. The enzyme catalyses ATP + H2O + 4 H(+)(in) = ADP + phosphate + 5 H(+)(out). Functionally, produces ATP from ADP in the presence of a proton gradient across the membrane. The alpha chain is a regulatory subunit. This is ATP synthase subunit alpha, chloroplastic from Lotus japonicus (Lotus corniculatus var. japonicus).